A 40-amino-acid chain; its full sequence is Photosystem II reaction center protein J (40 aa).

The chain crosses the membrane as a helical span at residues 8 to 28 (IPLWLIGTVTGIPVIGLVGIF).

This sequence belongs to the PsbJ family. In terms of assembly, PSII is composed of 1 copy each of membrane proteins PsbA, PsbB, PsbC, PsbD, PsbE, PsbF, PsbH, PsbI, PsbJ, PsbK, PsbL, PsbM, PsbT, PsbX, PsbY, PsbZ, Psb30/Ycf12, at least 3 peripheral proteins of the oxygen-evolving complex and a large number of cofactors. It forms dimeric complexes.

The protein localises to the plastid. Its subcellular location is the chloroplast thylakoid membrane. Its function is as follows. One of the components of the core complex of photosystem II (PSII). PSII is a light-driven water:plastoquinone oxidoreductase that uses light energy to abstract electrons from H(2)O, generating O(2) and a proton gradient subsequently used for ATP formation. It consists of a core antenna complex that captures photons, and an electron transfer chain that converts photonic excitation into a charge separation. The sequence is that of Photosystem II reaction center protein J from Cucumis sativus (Cucumber).